Consider the following 270-residue polypeptide: Aliphatic sulfonates import ATP-binding protein SsuB 3 (270 aa).

The 222-residue stretch at Leu-17–Leu-238 folds into the ABC transporter domain. Gly-49–Ser-56 is a binding site for ATP.

The protein belongs to the ABC transporter superfamily. Aliphatic sulfonates importer (TC 3.A.1.17.2) family. The complex is composed of two ATP-binding proteins (SsuB), two transmembrane proteins (SsuC) and a solute-binding protein (SsuA).

It localises to the cell inner membrane. It catalyses the reaction ATP + H2O + aliphatic sulfonate-[sulfonate-binding protein]Side 1 = ADP + phosphate + aliphatic sulfonateSide 2 + [sulfonate-binding protein]Side 1.. Part of the ABC transporter complex SsuABC involved in aliphatic sulfonates import. Responsible for energy coupling to the transport system. This is Aliphatic sulfonates import ATP-binding protein SsuB 3 from Pseudomonas savastanoi pv. phaseolicola (strain 1448A / Race 6) (Pseudomonas syringae pv. phaseolicola (strain 1448A / Race 6)).